Consider the following 100-residue polypeptide: Urease subunit gamma (100 aa).

The protein belongs to the urease gamma subunit family. Heterotrimer of UreA (gamma), UreB (beta) and UreC (alpha) subunits. Three heterotrimers associate to form the active enzyme.

The protein localises to the cytoplasm. The enzyme catalyses urea + 2 H2O + H(+) = hydrogencarbonate + 2 NH4(+). The protein operates within nitrogen metabolism; urea degradation; CO(2) and NH(3) from urea (urease route): step 1/1. The protein is Urease subunit gamma of Hahella chejuensis (strain KCTC 2396).